Here is a 288-residue protein sequence, read N- to C-terminus: N-acetylneuraminate lyase (288 aa).

Ser-44 and Thr-45 together coordinate aceneuramate. Catalysis depends on Tyr-133, which acts as the Proton donor. Lys-161 serves as the catalytic Schiff-base intermediate with substrate. Residues Thr-163, Gly-185, Asp-187, Glu-188, and Ser-204 each coordinate aceneuramate.

Belongs to the DapA family. NanA subfamily. In terms of assembly, homotetramer.

It localises to the cytoplasm. It carries out the reaction aceneuramate = aldehydo-N-acetyl-D-mannosamine + pyruvate. The protein operates within amino-sugar metabolism; N-acetylneuraminate degradation; D-fructose 6-phosphate from N-acetylneuraminate: step 1/5. In terms of biological role, catalyzes the reversible aldol cleavage of N-acetylneuraminic acid (sialic acid; Neu5Ac) to form pyruvate and N-acetylmannosamine (ManNAc) via a Schiff base intermediate. The polypeptide is N-acetylneuraminate lyase (Clostridium perfringens (strain SM101 / Type A)).